A 378-amino-acid chain; its full sequence is 5-amino-6-(D-ribitylamino)uracil--L-tyrosine 4-hydroxyphenyl transferase (378 aa).

The Radical SAM core domain occupies 59–306 (VTYVINRNIN…TAVARIYLGN (248 aa)). 3 residues coordinate [4Fe-4S] cluster: Cys-73, Cys-77, and Cys-80.

It belongs to the radical SAM superfamily. CofH family. In terms of assembly, consists of two subunits, CofG and CofH. It depends on [4Fe-4S] cluster as a cofactor.

The catalysed reaction is 5-amino-6-(D-ribitylamino)uracil + L-tyrosine + S-adenosyl-L-methionine = 5-amino-5-(4-hydroxybenzyl)-6-(D-ribitylimino)-5,6-dihydrouracil + 2-iminoacetate + 5'-deoxyadenosine + L-methionine + H(+). It participates in cofactor biosynthesis; coenzyme F0 biosynthesis. Its function is as follows. Catalyzes the radical-mediated synthesis of 5-amino-5-(4-hydroxybenzyl)-6-(D-ribitylimino)-5,6-dihydrouracil from 5-amino-6-(D-ribitylamino)uracil and L-tyrosine. The polypeptide is 5-amino-6-(D-ribitylamino)uracil--L-tyrosine 4-hydroxyphenyl transferase (Microcystis aeruginosa (strain NIES-843 / IAM M-2473)).